The sequence spans 276 residues: 2-dehydro-3-deoxyphosphooctonate aldolase (276 aa).

Belongs to the KdsA family.

The protein localises to the cytoplasm. It carries out the reaction D-arabinose 5-phosphate + phosphoenolpyruvate + H2O = 3-deoxy-alpha-D-manno-2-octulosonate-8-phosphate + phosphate. It functions in the pathway carbohydrate biosynthesis; 3-deoxy-D-manno-octulosonate biosynthesis; 3-deoxy-D-manno-octulosonate from D-ribulose 5-phosphate: step 2/3. The protein operates within bacterial outer membrane biogenesis; lipopolysaccharide biosynthesis. This is 2-dehydro-3-deoxyphosphooctonate aldolase from Xanthomonas campestris pv. campestris (strain 8004).